The primary structure comprises 313 residues: MIDRFGRSIEDLRVTLTHVCNFSCFFCHMEGEDNSQSLLSPEEISLVAKVGIEYGIRSVKLTGGEPTLRRDLLQIIRELKDVGIKEVSMTTNGVLLSTLAWKLKEVGLDRVNVSLHSLDKQLFKEITGVDALDKVIEGIKEAIKAGLRPLKLNFVLTKKNISQLDNIINFAIETGVDELHLIELHPVGLGKNTFEYHEKLESIEKILKERADKIEIRSKHYRPRYYLNNLVIEVVKPYANPIFCAGCNRIRLTADGKLKTCLYRQDKEIDIMDILRGDFSLEEKIELIREAYEIAIAIREPNFKYKVESYAPS.

A Radical SAM core domain is found at 4–224 (RFGRSIEDLR…EIRSKHYRPR (221 aa)). Arg-13 lines the GTP pocket. [4Fe-4S] cluster-binding residues include Cys-20, Cys-24, and Cys-27. Lys-60 serves as a coordination point for GTP. Gly-64 is an S-adenosyl-L-methionine binding site. Thr-90 is a GTP binding site. Residue Ser-114 participates in S-adenosyl-L-methionine binding. Lys-151 contacts GTP. Residues Cys-244 and Cys-247 each contribute to the [4Fe-4S] cluster site. GTP is bound at residue 249–251 (RIR). Residue Cys-261 participates in [4Fe-4S] cluster binding.

It belongs to the radical SAM superfamily. MoaA family. [4Fe-4S] cluster serves as cofactor.

The catalysed reaction is GTP + AH2 + S-adenosyl-L-methionine = (8S)-3',8-cyclo-7,8-dihydroguanosine 5'-triphosphate + 5'-deoxyadenosine + L-methionine + A + H(+). It functions in the pathway cofactor biosynthesis; molybdopterin biosynthesis. Catalyzes the cyclization of GTP to (8S)-3',8-cyclo-7,8-dihydroguanosine 5'-triphosphate. The sequence is that of Probable GTP 3',8-cyclase from Sulfurisphaera tokodaii (strain DSM 16993 / JCM 10545 / NBRC 100140 / 7) (Sulfolobus tokodaii).